The sequence spans 165 residues: Endoribonuclease YbeY (165 aa).

Positions 130, 134, and 140 each coordinate Zn(2+).

Belongs to the endoribonuclease YbeY family. Zn(2+) serves as cofactor.

It localises to the cytoplasm. Functionally, single strand-specific metallo-endoribonuclease involved in late-stage 70S ribosome quality control and in maturation of the 3' terminus of the 16S rRNA. The chain is Endoribonuclease YbeY from Streptococcus pneumoniae serotype 4 (strain ATCC BAA-334 / TIGR4).